The primary structure comprises 120 residues: uncharacterized protein (120 aa).

The region spanning 13-119 is the PRD domain; it reads VIDKDICKGM…YGLWMAANEE (107 aa).

This is an uncharacterized protein from Escherichia coli (strain K12).